A 78-amino-acid chain; its full sequence is MAVKEEVVEILNTIIGEDISDQMDDDFFESGLLDSMSTVELLLDLESKFNIQAPVSEFNRDEWNTPNKVIAKVESLIG.

The Carrier domain occupies 1 to 77; that stretch reads MAVKEEVVEI…KVIAKVESLI (77 aa). O-(pantetheine 4'-phosphoryl)serine is present on serine 35.

This sequence belongs to the DltC family. Post-translationally, 4'-phosphopantetheine is transferred from CoA to a specific serine of apo-DCP.

The protein resides in the cytoplasm. It functions in the pathway cell wall biogenesis; lipoteichoic acid biosynthesis. Carrier protein involved in the D-alanylation of lipoteichoic acid (LTA). The loading of thioester-linked D-alanine onto DltC is catalyzed by D-alanine--D-alanyl carrier protein ligase DltA. The DltC-carried D-alanyl group is further transferred to cell membrane phosphatidylglycerol (PG) by forming an ester bond, probably catalyzed by DltD. D-alanylation of LTA plays an important role in modulating the properties of the cell wall in Gram-positive bacteria, influencing the net charge of the cell wall. The sequence is that of D-alanyl carrier protein from Leuconostoc citreum (strain KM20).